The sequence spans 543 residues: T-complex protein 1 subunit eta (543 aa).

Met-1 bears the N-acetylmethionine mark. Residue Gly-41 participates in ADP binding. Gly-41 contributes to the ATP binding site. Lys-67 carries the N6-acetyllysine modification. Mg(2+) is bound at residue Asp-92. ADP is bound by residues Gly-93, Thr-94, Thr-95, Ser-96, Ser-164, and Ser-165. Gly-93 contributes to the ATP binding site. Residue Ser-96 coordinates ATP. N6-acetyllysine is present on residues Lys-250 and Lys-320. Residues Arg-398 and Gly-409 each contribute to the ATP site. Gly-409 is an ADP binding site. A Glycyl lysine isopeptide (Lys-Gly) (interchain with G-Cter in SUMO2) cross-link involves residue Lys-430. ADP is bound by residues Glu-494 and Arg-499. Residue Arg-499 coordinates ATP. Positions 524-543 (RSTVDAPTAAGRGRGRGRPH) are disordered. Arg-535 is modified (omega-N-methylarginine).

Belongs to the TCP-1 chaperonin family. As to quaternary structure, component of the chaperonin-containing T-complex (TRiC), a hexadecamer composed of two identical back-to-back stacked rings enclosing a protein folding chamber. Each ring is made up of eight different subunits: TCP1/CCT1, CCT2, CCT3, CCT4, CCT5, CCT6A/CCT6, CCT7, CCT8. Interacts with PACRG. Interacts with DLEC1.

The protein localises to the cytoplasm. It carries out the reaction ATP + H2O = ADP + phosphate + H(+). Its function is as follows. Component of the chaperonin-containing T-complex (TRiC), a molecular chaperone complex that assists the folding of actin, tubulin and other proteins upon ATP hydrolysis. The TRiC complex mediates the folding of WRAP53/TCAB1, thereby regulating telomere maintenance. The chain is T-complex protein 1 subunit eta (CCT7) from Homo sapiens (Human).